The following is a 739-amino-acid chain: Polyribonucleotide nucleotidyltransferase (739 aa).

Residues Asp-514 and Asp-520 each coordinate Mg(2+). The 60-residue stretch at 580-639 (PRIITVKIPVDKIGEVIGPKGKMINQIQEDTGADITIEDDGTIYIGAAQGSQAEAARATI) folds into the KH domain. The 73-residue stretch at 651–723 (GERYLGTVVK…SRGKLSLIPV (73 aa)) folds into the S1 motif domain.

It belongs to the polyribonucleotide nucleotidyltransferase family. Requires Mg(2+) as cofactor.

Its subcellular location is the cytoplasm. The catalysed reaction is RNA(n+1) + phosphate = RNA(n) + a ribonucleoside 5'-diphosphate. Its function is as follows. Involved in mRNA degradation. Catalyzes the phosphorolysis of single-stranded polyribonucleotides processively in the 3'- to 5'-direction. This is Polyribonucleotide nucleotidyltransferase from Streptomyces coelicolor (strain ATCC BAA-471 / A3(2) / M145).